The primary structure comprises 614 residues: Fimbrin (614 aa).

EF-hand domains are found at residues glutamate 16–lysine 50 and glycine 51–glycine 86. 8 residues coordinate Ca(2+): aspartate 29, aspartate 31, tyrosine 35, threonine 40, aspartate 66, serine 68, arginine 70, and aspartate 75. 2 actin-binding regions span residues threonine 98–proline 368 and leucine 369–valine 614. Calponin-homology (CH) domains follow at residues glutamate 112–leucine 233, leucine 261–proline 364, glutamate 385–isoleucine 495, and threonine 508–valine 614.

The protein resides in the cytoplasm. It is found in the cytoskeleton. The protein localises to the actin patch. In terms of biological role, binds to actin, and functionally associates with actin structures involved in the development and maintenance of cell polarity. Plays a role in cytokinesis. Plays important roles in mating and in spore formation. This Schizosaccharomyces pombe (strain 972 / ATCC 24843) (Fission yeast) protein is Fimbrin (fim1).